Here is a 270-residue protein sequence, read N- to C-terminus: 3-phenylpropionate-dihydrodiol/cinnamic acid-dihydrodiol dehydrogenase (270 aa).

10-34 contacts NAD(+); the sequence is FITGGGSGLGLALVERFIEEGAQVA. Substrate is bound at residue S143. The Proton acceptor role is filled by Y156.

Belongs to the short-chain dehydrogenases/reductases (SDR) family.

It carries out the reaction 3-(cis-5,6-dihydroxycyclohexa-1,3-dien-1-yl)propanoate + NAD(+) = 3-(2,3-dihydroxyphenyl)propanoate + NADH + H(+). The enzyme catalyses (2E)-3-(cis-5,6-dihydroxycyclohexa-1,3-dien-1-yl)prop-2-enoate + NAD(+) = (2E)-3-(2,3-dihydroxyphenyl)prop-2-enoate + NADH + H(+). Its pathway is aromatic compound metabolism; 3-phenylpropanoate degradation. Converts 3-phenylpropionate-dihydrodiol (PP-dihydrodiol) and cinnamic acid-dihydrodiol (CI-dihydrodiol) into 3-(2,3-dihydroxylphenyl)propanoic acid (DHPP) and 2,3-dihydroxicinnamic acid (DHCI), respectively. The protein is 3-phenylpropionate-dihydrodiol/cinnamic acid-dihydrodiol dehydrogenase of Escherichia coli O8 (strain IAI1).